A 564-amino-acid polypeptide reads, in one-letter code: Dihydropyrimidinase-related protein 5 (564 aa).

A phosphothreonine mark is found at Thr-509 and Thr-514. A phosphoserine mark is found at Ser-532 and Ser-538. Residue Arg-559 is modified to Omega-N-methylarginine.

Belongs to the metallo-dependent hydrolases superfamily. Hydantoinase/dihydropyrimidinase family. As to quaternary structure, homotetramer, and heterotetramer with other DPYS-like proteins. Interacts with DPYSL2, DPYSL3 and DPYSL4. Interacts with SEPTIN4 isoform 4. Interacts with MAP2 and TUBB3. In terms of tissue distribution, detected in brain.

It localises to the cytoplasm. Involved in the negative regulation of dendrite outgrowth. In Mus musculus (Mouse), this protein is Dihydropyrimidinase-related protein 5 (Dpysl5).